The following is a 342-amino-acid chain: Ketol-acid reductoisomerase (NADP(+)) (342 aa).

The KARI N-terminal Rossmann domain occupies 2–182 (AEIYYDNDAD…GGLRAGGIKT (181 aa)). Residues 25–28 (YGSQ), lysine 48, serine 51, serine 53, and 83–86 (DQVQ) contribute to the NADP(+) site. Histidine 108 is an active-site residue. Glycine 134 provides a ligand contact to NADP(+). A KARI C-terminal knotted domain is found at 183–328 (TFTEETETDL…RELRKLFAWN (146 aa)). Residues aspartate 191, glutamate 195, glutamate 227, and glutamate 231 each contribute to the Mg(2+) site. Serine 252 lines the substrate pocket.

It belongs to the ketol-acid reductoisomerase family. Mg(2+) is required as a cofactor.

The catalysed reaction is (2R)-2,3-dihydroxy-3-methylbutanoate + NADP(+) = (2S)-2-acetolactate + NADPH + H(+). The enzyme catalyses (2R,3R)-2,3-dihydroxy-3-methylpentanoate + NADP(+) = (S)-2-ethyl-2-hydroxy-3-oxobutanoate + NADPH + H(+). It participates in amino-acid biosynthesis; L-isoleucine biosynthesis; L-isoleucine from 2-oxobutanoate: step 2/4. The protein operates within amino-acid biosynthesis; L-valine biosynthesis; L-valine from pyruvate: step 2/4. Its function is as follows. Involved in the biosynthesis of branched-chain amino acids (BCAA). Catalyzes an alkyl-migration followed by a ketol-acid reduction of (S)-2-acetolactate (S2AL) to yield (R)-2,3-dihydroxy-isovalerate. In the isomerase reaction, S2AL is rearranged via a Mg-dependent methyl migration to produce 3-hydroxy-3-methyl-2-ketobutyrate (HMKB). In the reductase reaction, this 2-ketoacid undergoes a metal-dependent reduction by NADPH to yield (R)-2,3-dihydroxy-isovalerate. The polypeptide is Ketol-acid reductoisomerase (NADP(+)) (Leifsonia xyli subsp. xyli (strain CTCB07)).